Here is a 101-residue protein sequence, read N- to C-terminus: MKKTWLPFLLLPLLVSATIFSAQAPYDTAQGFEGLNIGAGLAIGLAAIGAGVAVGMAAAAGIGVLTERRDMFGTILIFVAIGEGIAVYGILFAVLMLFGKF.

Helical transmembrane passes span 5 to 25, 37 to 57, and 75 to 95; these read WLPFLLLPLLVSATIFSAQAP, IGAGLAIGLAAIGAGVAVGMA, and ILIFVAIGEGIAVYGILFAVL.

It belongs to the V-ATPase proteolipid subunit family. In terms of assembly, has multiple subunits with at least A(3), B(3), C, D, E, F, H, I and proteolipid K(x). The N-terminus is blocked.

It is found in the cell membrane. Its function is as follows. Component of the A-type ATP synthase that produces ATP from ADP in the presence of a proton gradient across the membrane. The polypeptide is A-type ATP synthase subunit K (Sulfurisphaera tokodaii (strain DSM 16993 / JCM 10545 / NBRC 100140 / 7) (Sulfolobus tokodaii)).